The sequence spans 178 residues: Large ribosomal subunit protein uL6 (178 aa).

The protein belongs to the universal ribosomal protein uL6 family. In terms of assembly, part of the 50S ribosomal subunit.

In terms of biological role, this protein binds to the 23S rRNA, and is important in its secondary structure. It is located near the subunit interface in the base of the L7/L12 stalk, and near the tRNA binding site of the peptidyltransferase center. The protein is Large ribosomal subunit protein uL6 of Nautilia profundicola (strain ATCC BAA-1463 / DSM 18972 / AmH).